Consider the following 405-residue polypeptide: Probable tRNA sulfurtransferase (405 aa).

A THUMP domain is found at 60 to 165; the sequence is ETIDQRLKLV…QDAIYISNQL (106 aa). ATP is bound by residues 183–184, 208–209, R265, G287, and Q296; these read ML and HF.

The protein belongs to the ThiI family.

It localises to the cytoplasm. The enzyme catalyses [ThiI sulfur-carrier protein]-S-sulfanyl-L-cysteine + a uridine in tRNA + 2 reduced [2Fe-2S]-[ferredoxin] + ATP + H(+) = [ThiI sulfur-carrier protein]-L-cysteine + a 4-thiouridine in tRNA + 2 oxidized [2Fe-2S]-[ferredoxin] + AMP + diphosphate. It carries out the reaction [ThiS sulfur-carrier protein]-C-terminal Gly-Gly-AMP + S-sulfanyl-L-cysteinyl-[cysteine desulfurase] + AH2 = [ThiS sulfur-carrier protein]-C-terminal-Gly-aminoethanethioate + L-cysteinyl-[cysteine desulfurase] + A + AMP + 2 H(+). It participates in cofactor biosynthesis; thiamine diphosphate biosynthesis. In terms of biological role, catalyzes the ATP-dependent transfer of a sulfur to tRNA to produce 4-thiouridine in position 8 of tRNAs, which functions as a near-UV photosensor. Also catalyzes the transfer of sulfur to the sulfur carrier protein ThiS, forming ThiS-thiocarboxylate. This is a step in the synthesis of thiazole, in the thiamine biosynthesis pathway. The sulfur is donated as persulfide by IscS. The polypeptide is Probable tRNA sulfurtransferase (Lactobacillus johnsonii (strain CNCM I-12250 / La1 / NCC 533)).